The sequence spans 541 residues: Chaperonin GroEL (541 aa).

Residues 29–32 (TLGP), 86–90 (DGTTT), glycine 413, 478–480 (NAL), and aspartate 494 contribute to the ATP site.

This sequence belongs to the chaperonin (HSP60) family. Forms a cylinder of 14 subunits composed of two heptameric rings stacked back-to-back. Interacts with the co-chaperonin GroES.

The protein resides in the cytoplasm. The enzyme catalyses ATP + H2O + a folded polypeptide = ADP + phosphate + an unfolded polypeptide.. Functionally, together with its co-chaperonin GroES, plays an essential role in assisting protein folding. The GroEL-GroES system forms a nano-cage that allows encapsulation of the non-native substrate proteins and provides a physical environment optimized to promote and accelerate protein folding. This is Chaperonin GroEL from Lachnoclostridium phytofermentans (strain ATCC 700394 / DSM 18823 / ISDg) (Clostridium phytofermentans).